We begin with the raw amino-acid sequence, 122 residues long: UPF0102 protein CPF_1959 (122 aa).

Belongs to the UPF0102 family.

The protein is UPF0102 protein CPF_1959 of Clostridium perfringens (strain ATCC 13124 / DSM 756 / JCM 1290 / NCIMB 6125 / NCTC 8237 / Type A).